A 210-amino-acid chain; its full sequence is DNA-directed RNA polymerases I, II, and III subunit RPABC1 (210 aa).

The residue at position 1 (Met-1) is an N-acetylmethionine. A Glycyl lysine isopeptide (Lys-Gly) (interchain with G-Cter in SUMO2) cross-link involves residue Lys-81.

Belongs to the archaeal Rpo5/eukaryotic RPB5 RNA polymerase subunit family. In terms of assembly, component of the RNA polymerase I (Pol I), RNA polymerase II (Pol II) and RNA polymerase III (Pol III) complexes consisting of at least 13, 12 and 17 subunits, respectively. Pol I complex consists of a ten-subunit catalytic core composed of POLR1A/RPA1, POLR1B/RPA2, POLR1C/RPAC1, POLR1D/RPAC2, POLR1H/RPA12, POLR2E/RPABC1, POLR2F/RPABC2, POLR2H/RPABC3, POLR2K/RPABC4 and POLR2L/RPABC5; a mobile stalk subunit POLR1F/RPA43 protruding from the core and additional subunits homologous to general transcription factors POLR1E/RPA49 and POLR1G/RPA34. Part of Pol I pre-initiation complex (PIC), in which Pol I core assembles with RRN3 and promoter-bound UTBF and SL1/TIF-IB complex. Pol II complex contains a ten-subunit catalytic core composed of POLR2A/RPB1, POLR2B/RPB2, POLR2C/RPB3, POLR2I/RPB9, POLR2J/RPB11, POLR2E/RPABC1, POLR2F/RPABC2, POLR2H/RPABC3, POLR2K/RPABC4 and POLR2L/RPABC5 and a mobile stalk composed of two subunits POLR2D/RPB4 and POLR2G/RPB7. Part of Pol II(G) complex, in which Pol II core associates with an additional subunit POLR2M; unlike conventional Pol II, Pol II(G) functions as a transcriptional repressor. Part of TBP-based Pol II pre-initiation complex (PIC), in which Pol II core assembles with general transcription factors and other specific initiation factors including GTF2E1, GTF2E2, GTF2F1, GTF2F2, TCEA1, ERCC2, ERCC3, GTF2H2, GTF2H3, GTF2H4, GTF2H5, GTF2A1, GTF2A2, GTF2B and TBP; this large multi-subunit PIC complex mediates DNA unwinding and targets Pol II core to the transcription start site where the first phosphodiester bond forms. In Pol II complex, this subunit is present in 2-fold molar excess over the other subunits. Pol III complex consists of a ten-subunit catalytic core composed of POLR3A/RPC1, POLR3B/RPC2, POLR1C/RPAC1, POLR1D/RPAC2, POLR3K/RPC10, POLR2E/RPABC1, POLR2F/RPABC2, POLR2H/RPABC3, POLR2K/RPABC4 and POLR2L/RPABC5; a mobile stalk composed of two subunits POLR3H/RPC8 and CRCP/RPC9, protruding from the core and functioning primarily in transcription initiation; and additional subunits homologous to general transcription factors of the RNA polymerase II machinery, POLR3C/RPC3-POLR3F/RPC6-POLR3G/RPC7 heterotrimer required for transcription initiation and POLR3D/RPC4-POLR3E/RPC5 heterodimer involved in both transcription initiation and termination. Component of the PAQosome complex which is responsible for the biogenesis of several protein complexes and which consists of R2TP complex members RUVBL1, RUVBL2, RPAP3 and PIH1D1, URI complex members PFDN2, PFDN6, PDRG1, UXT and URI1 as well as ASDURF, POLR2E and DNAAF10/WDR92. Interacts with URI1. As to quaternary structure, (Microbial infection) Interacts with HBV protein X.

The protein localises to the nucleus. It is found in the nucleolus. Its function is as follows. DNA-dependent RNA polymerase catalyzes the transcription of DNA into RNA using the four ribonucleoside triphosphates as substrates. Common component of RNA polymerases I, II and III which synthesize ribosomal RNA precursors, mRNA precursors and many functional non-coding RNAs, and small RNAs, such as 5S rRNA and tRNAs, respectively. Pol II is the central component of the basal RNA polymerase II transcription machinery. Pols are composed of mobile elements that move relative to each other. In Pol II, POLR2E/RPABC1 is part of the lower jaw surrounding the central large cleft and thought to grab the incoming DNA template. This Homo sapiens (Human) protein is DNA-directed RNA polymerases I, II, and III subunit RPABC1.